We begin with the raw amino-acid sequence, 801 residues long: Na(+)/H(+) antiporter subunit A1 (801 aa).

19 helical membrane-spanning segments follow: residues 1–21 (MSLL…IPIL), 28–48 (IHLG…MLTL), 79–99 (LGLL…LYSI), 117–137 (LFMG…LYLF), 166–186 (LIIT…LAIP), 206–226 (PFFI…SAQF), 265–285 (IFAA…ITLF), 300–320 (ILAF…GIGA), 337–357 (FTAA…LFMI), 373–393 (LGGL…TALS), 427–447 (LGYL…VYSI), 472–492 (ILML…GLFP), 522–542 (GLTP…LLIV), 591–611 (LVII…SVPF), 623–643 (IFEV…LFAK), 646–666 (LFSI…FIFF), 671–691 (LALT…LCFY), 707–727 (LTNA…GLIA), and 764–784 (MDTL…YTMI).

The protein belongs to the CPA3 antiporters (TC 2.A.63) subunit A family. As to quaternary structure, may form a heterooligomeric complex that consists of seven subunits: mnhA1, mnhB1, mnhC1, mnhD1, mnhE1, mnhF1 and mnhG1.

The protein localises to the cell membrane. Functionally, mnh complex is a Na(+)/H(+) antiporter involved in Na(+) excretion. The protein is Na(+)/H(+) antiporter subunit A1 (mnhA1) of Staphylococcus aureus (strain Mu3 / ATCC 700698).